Here is a 475-residue protein sequence, read N- to C-terminus: Ornithine aminotransferase, mitochondrial (475 aa).

Residues methionine 1–phenylalanine 16 constitute a mitochondrion transit peptide. Residues arginine 23–leucine 43 form a disordered region. A compositionally biased stretch (low complexity) spans proline 29–glutamine 41. Pyridoxal 5'-phosphate contacts are provided by residues glycine 142–alanine 143 and phenylalanine 177. Arginine 180 is an L-ornithine binding site. Position 265-268 (aspartate 265–glutamine 268) interacts with pyridoxal 5'-phosphate. The residue at position 294 (lysine 294) is an N6-(pyridoxal phosphate)lysine. L-ornithine is bound at residue serine 323. Threonine 324 contacts pyridoxal 5'-phosphate.

The protein belongs to the class-III pyridoxal-phosphate-dependent aminotransferase family. In terms of assembly, homotetramer. Pyridoxal 5'-phosphate is required as a cofactor.

It is found in the mitochondrion matrix. It carries out the reaction a 2-oxocarboxylate + L-ornithine = L-glutamate 5-semialdehyde + an L-alpha-amino acid. It functions in the pathway amino-acid biosynthesis; L-proline biosynthesis; L-glutamate 5-semialdehyde from L-ornithine: step 1/1. Functionally, mediates degradation of arginine for nitrogen recycling. Plays a role in non-host disease resistance by regulating pyrroline-5-carboxylate metabolism-induced hypersensitive response. In Arabidopsis thaliana (Mouse-ear cress), this protein is Ornithine aminotransferase, mitochondrial.